The primary structure comprises 299 residues: Oxygen-dependent coproporphyrinogen-III oxidase (299 aa).

Ser92 serves as a coordination point for substrate. A divalent metal cation is bound by residues His96 and His106. His106 (proton donor) is an active-site residue. A substrate-binding site is contributed by 108–110 (NVR). A divalent metal cation is bound by residues His145 and His175. Residues 240–275 (YVEFNLVWDRGTLFGLQTGGRTESILMSMPPLVRWE) form an important for dimerization region. A substrate-binding site is contributed by 258 to 260 (GGR).

Belongs to the aerobic coproporphyrinogen-III oxidase family. As to quaternary structure, homodimer. A divalent metal cation serves as cofactor.

The protein resides in the cytoplasm. The enzyme catalyses coproporphyrinogen III + O2 + 2 H(+) = protoporphyrinogen IX + 2 CO2 + 2 H2O. It participates in porphyrin-containing compound metabolism; protoporphyrin-IX biosynthesis; protoporphyrinogen-IX from coproporphyrinogen-III (O2 route): step 1/1. In terms of biological role, involved in the heme biosynthesis. Catalyzes the aerobic oxidative decarboxylation of propionate groups of rings A and B of coproporphyrinogen-III to yield the vinyl groups in protoporphyrinogen-IX. In Salmonella newport (strain SL254), this protein is Oxygen-dependent coproporphyrinogen-III oxidase.